A 31-amino-acid polypeptide reads, in one-letter code: Cyclopsychotride-A (31 aa).

Positions Ser-1–Asn-31 form a cross-link, cyclopeptide (Ser-Asn). 3 cysteine pairs are disulfide-bonded: Cys-4/Cys-21, Cys-8/Cys-23, and Cys-13/Cys-28.

This sequence belongs to the cyclotide family. Bracelet subfamily. This is a cyclic peptide.

Its function is as follows. Probably participates in a plant defense mechanism. Has antibiotic activity. Inhibits the cytopathic effects and replication of the human immunodeficiency virus. Active against both Gram-positive and Gram-negative bacteria. This chain is Cyclopsychotride-A, found in Psychotria longipes.